A 523-amino-acid polypeptide reads, in one-letter code: Cyclin-dependent kinase 17 (523 aa).

Phosphoserine is present on serine 9. The interval 30 to 55 is disordered; it reads TIEENSSKDNEPIVKNGRPPTSHSMH. A phosphoserine mark is found at serine 80, serine 92, and serine 105. The disordered stretch occupies residues 103–123; the sequence is MGSDGESDQASGTSSDEVQSP. The segment covering 110 to 123 has biased composition (polar residues); that stretch reads DQASGTSSDEVQSP. A phosphoserine mark is found at serine 137, serine 146, serine 165, and serine 180. The Protein kinase domain maps to 192–473; that stretch reads YIKLEKLGEG…AEEAMKHVYF (282 aa). ATP contacts are provided by residues 198–206 and lysine 221; that span reads LGEGTYATV. The active-site Proton acceptor is aspartate 313. The interval 501–523 is disordered; it reads PGFRNSSYPETGHGKNRRQSMLF. Positions 514–523 are enriched in basic residues; the sequence is GKNRRQSMLF.

The protein belongs to the protein kinase superfamily. CMGC Ser/Thr protein kinase family. CDC2/CDKX subfamily. As to quaternary structure, found in a complex containing CABLES1, CDK16 and TDRD7. Interacts with TDRD7.

It catalyses the reaction L-seryl-[protein] + ATP = O-phospho-L-seryl-[protein] + ADP + H(+). The enzyme catalyses L-threonyl-[protein] + ATP = O-phospho-L-threonyl-[protein] + ADP + H(+). In terms of biological role, may play a role in terminally differentiated neurons. Has a Ser/Thr-phosphorylating activity for histone H1. This Homo sapiens (Human) protein is Cyclin-dependent kinase 17 (CDK17).